Reading from the N-terminus, the 222-residue chain is MDLLFGRRKTPEELLRQNQRALNRAMRELDRERQKLETQEKKIIADIKKMAKQGQMDAVRIMAKDLVRTRRYVRKFVLMRANIQAVSLKIQTLKSNNSMAQAMKGVTKAMGTMNRQLKLPQIQKIMMEFERQAEIMDMKEEMMNDAIDDAMGDEEDEEESDAVVSQVLDELGLSLTDELSNLPSTGGSLSVAAGGKKAEAAASALADADADLEERLKNLRRD.

Position 1 is an N-acetylmethionine (Met1). Positions Glu12–Gln53 form a coiled coil. The interval Met56 to Asp222 is interaction with VPS4B. Ser184 is subject to Phosphoserine. Thr185 carries the post-translational modification Phosphothreonine. Ser188, Ser190, and Ser203 each carry phosphoserine. Positions Gly195–Asp222 form a coiled coil. The MIT-interacting motif motif lies at Ala210–Arg220. Positions Lys217–Asp222 are interaction with VTA1.

It belongs to the SNF7 family. As to quaternary structure, probable core component of the endosomal sorting required for transport complex III (ESCRT-III). ESCRT-III components are thought to multimerize to form a flat lattice on the perimeter membrane of the endosome. Several assembly forms of ESCRT-III may exist that interact and act sequentially. In vitro, heteromerizes with CHMP3 (but not CHMP4) to form helical tubular structures that expose membrane-interacting sites on the outside whereas VPS4B can associate on the inside of the tubule. Interacts with CHMP1B, CHMP2B, CHMP3, CHMP4A, CHMP4B, CHMP4C and CHMP5. Interacts with VPS4A; the interaction is direct. Interacts with VPS4B; the interaction is direct. Interacts with MITD1. Interacts with VTA1; the interaction probably involves the open conformation of CHMP2A. Post-translationally, ISGylated in a CHMP5-dependent manner. Isgylation weakens and inhibits its interactions with VPS4A and VTA1 respectively.

It is found in the late endosome membrane. It localises to the nucleus envelope. Its function is as follows. Probable core component of the endosomal sorting required for transport complex III (ESCRT-III) which is involved in multivesicular bodies (MVBs) formation and sorting of endosomal cargo proteins into MVBs. MVBs contain intraluminal vesicles (ILVs) that are generated by invagination and scission from the limiting membrane of the endosome and mostly are delivered to lysosomes enabling degradation of membrane proteins, such as stimulated growth factor receptors, lysosomal enzymes and lipids. The MVB pathway appears to require the sequential function of ESCRT-O, -I,-II and -III complexes. ESCRT-III proteins mostly dissociate from the invaginating membrane before the ILV is released. The ESCRT machinery also functions in topologically equivalent membrane fission events, such as the terminal stages of cytokinesis. Together with SPAST, the ESCRT-III complex promotes nuclear envelope sealing and mitotic spindle disassembly during late anaphase. Recruited to the reforming nuclear envelope (NE) during anaphase by LEMD2. ESCRT-III proteins are believed to mediate the necessary vesicle extrusion and/or membrane fission activities, possibly in conjunction with the AAA ATPase VPS4. (Microbial infection) The ESCRT machinery functions in topologically equivalent membrane fission events, such as the budding of enveloped viruses (HIV-1 and other lentiviruses). Involved in HIV-1 p6- and p9-dependent virus release. The chain is Charged multivesicular body protein 2a (CHMP2A) from Homo sapiens (Human).